Consider the following 611-residue polypeptide: Dihydroxy-acid dehydratase (611 aa).

Asp-81 is a Mg(2+) binding site. Cys-122 provides a ligand contact to [2Fe-2S] cluster. Asp-123 and Lys-124 together coordinate Mg(2+). N6-carboxylysine is present on Lys-124. Cys-195 serves as a coordination point for [2Fe-2S] cluster. Glu-491 provides a ligand contact to Mg(2+). Ser-517 functions as the Proton acceptor in the catalytic mechanism.

It belongs to the IlvD/Edd family. In terms of assembly, homodimer. The cofactor is [2Fe-2S] cluster. Mg(2+) serves as cofactor.

The catalysed reaction is (2R)-2,3-dihydroxy-3-methylbutanoate = 3-methyl-2-oxobutanoate + H2O. It carries out the reaction (2R,3R)-2,3-dihydroxy-3-methylpentanoate = (S)-3-methyl-2-oxopentanoate + H2O. Its pathway is amino-acid biosynthesis; L-isoleucine biosynthesis; L-isoleucine from 2-oxobutanoate: step 3/4. It participates in amino-acid biosynthesis; L-valine biosynthesis; L-valine from pyruvate: step 3/4. In terms of biological role, functions in the biosynthesis of branched-chain amino acids. Catalyzes the dehydration of (2R,3R)-2,3-dihydroxy-3-methylpentanoate (2,3-dihydroxy-3-methylvalerate) into 2-oxo-3-methylpentanoate (2-oxo-3-methylvalerate) and of (2R)-2,3-dihydroxy-3-methylbutanoate (2,3-dihydroxyisovalerate) into 2-oxo-3-methylbutanoate (2-oxoisovalerate), the penultimate precursor to L-isoleucine and L-valine, respectively. The sequence is that of Dihydroxy-acid dehydratase from Agrobacterium fabrum (strain C58 / ATCC 33970) (Agrobacterium tumefaciens (strain C58)).